Reading from the N-terminus, the 509-residue chain is ATP synthase subunit alpha (509 aa).

169–176 is a binding site for ATP; it reads GDRQTGKT.

It belongs to the ATPase alpha/beta chains family. In terms of assembly, F-type ATPases have 2 components, CF(1) - the catalytic core - and CF(0) - the membrane proton channel. CF(1) has five subunits: alpha(3), beta(3), gamma(1), delta(1), epsilon(1). CF(0) has three main subunits: a(1), b(2) and c(9-12). The alpha and beta chains form an alternating ring which encloses part of the gamma chain. CF(1) is attached to CF(0) by a central stalk formed by the gamma and epsilon chains, while a peripheral stalk is formed by the delta and b chains.

The protein resides in the cell inner membrane. The enzyme catalyses ATP + H2O + 4 H(+)(in) = ADP + phosphate + 5 H(+)(out). Its function is as follows. Produces ATP from ADP in the presence of a proton gradient across the membrane. The alpha chain is a regulatory subunit. The protein is ATP synthase subunit alpha of Paramagnetospirillum magneticum (strain ATCC 700264 / AMB-1) (Magnetospirillum magneticum).